The sequence spans 349 residues: KH domain-containing, RNA-binding, signal transduction-associated protein 2 (349 aa).

Positions 65–135 (LIPVKQYPKF…HLSDELHVLI (71 aa)) constitute a KH domain. 2 disordered regions span residues 181 to 263 (SEES…PPPA) and 320 to 349 (EEWT…YGRY). A compositionally biased stretch (low complexity) spans 218–231 (RGVLTPRGTTVTRG). An omega-N-methylarginine mark is found at Arg-230 and Arg-240. A compositionally biased stretch (basic and acidic residues) spans 340 to 349 (GYREHPYGRY).

This sequence belongs to the KHDRBS family. Self-associates to form homooligomers. Interacts with SAFB, SFRS9 and YTHDC1. Found in a complex with KHDRBS1, KHDRBS2 and KHDRBS3. Interacts with RBMX. Interacts with the SH3 domains of FYN and PLCG1. Interacts with the SH2 domains of FYN, GRAP2, PLCG1 and RASA1. Interacts with RBMX. In terms of processing, methylated. Post-translationally, phosphorylated on tyrosine residues by FYN. Tyrosine phosphorylated by PTK6 and SRC. Tyrosine phosphorylated by SRC during mitosis. Expressed in the cortex, cerebellum, striatum, midbrain, brainstem and thalamus of the brain (at protein level). Expressed in neurons (at protein level). Expressed in brain and testis. Expressed in the dentate gyrus of the hippocampus.

It is found in the nucleus. Its function is as follows. RNA-binding protein that plays a role in the regulation of alternative splicing and influences mRNA splice site selection and exon inclusion. Its phosphorylation by FYN inhibits its ability to regulate splice site selection. Induces an increased concentration-dependent incorporation of exon in CD44 pre-mRNA by direct binding to purine-rich exonic enhancer. May function as an adapter protein for Src kinases during mitosis. Binds both poly(A) and poly(U) homopolymers. Phosphorylation by PTK6 inhibits its RNA-binding ability. The sequence is that of KH domain-containing, RNA-binding, signal transduction-associated protein 2 (Khdrbs2) from Rattus norvegicus (Rat).